The following is a 629-amino-acid chain: Forkhead box protein O1-B (629 aa).

Disordered regions lie at residues M1 to G54, C88 to N134, S211 to L308, and K359 to V397. Residues Q36 to A46 are compositionally biased toward polar residues. Low complexity-rich tracts occupy residues H90–Q107 and P115–R133. The fork-head DNA-binding region spans W136–A230. The span at T240 to M251 shows a compositional bias: basic residues. 3 stretches are compositionally biased toward polar residues: residues T291–G302, K359–M377, and S385–V397.

It is found in the cytoplasm. It localises to the nucleus. In terms of biological role, transcription factor that regulates metabolic homeostasis in response to oxidative stress. Binds to the consensus sequence 5'-TT[G/A]TTTTG-3' and the related Daf-16 family binding element (DBE) with consensus sequence 5'-TT[G/A]TTTAC-3'. Main regulator of redox balance and osteoblast numbers and controls bone mass. Orchestrates the endocrine function of the skeleton in regulating glucose metabolism. May act as a positive regulator of apoptosis in cardiac smooth muscle cells as a result of its transcriptional activation of pro-apoptotic genes. This Danio rerio (Zebrafish) protein is Forkhead box protein O1-B (foxo1b).